A 258-amino-acid polypeptide reads, in one-letter code: Imidazole glycerol phosphate synthase subunit HisF (258 aa).

Active-site residues include Asp-11 and Asp-130.

It belongs to the HisA/HisF family. As to quaternary structure, heterodimer of HisH and HisF.

The protein localises to the cytoplasm. The catalysed reaction is 5-[(5-phospho-1-deoxy-D-ribulos-1-ylimino)methylamino]-1-(5-phospho-beta-D-ribosyl)imidazole-4-carboxamide + L-glutamine = D-erythro-1-(imidazol-4-yl)glycerol 3-phosphate + 5-amino-1-(5-phospho-beta-D-ribosyl)imidazole-4-carboxamide + L-glutamate + H(+). It functions in the pathway amino-acid biosynthesis; L-histidine biosynthesis; L-histidine from 5-phospho-alpha-D-ribose 1-diphosphate: step 5/9. Its function is as follows. IGPS catalyzes the conversion of PRFAR and glutamine to IGP, AICAR and glutamate. The HisF subunit catalyzes the cyclization activity that produces IGP and AICAR from PRFAR using the ammonia provided by the HisH subunit. The polypeptide is Imidazole glycerol phosphate synthase subunit HisF (Magnetococcus marinus (strain ATCC BAA-1437 / JCM 17883 / MC-1)).